The following is a 695-amino-acid chain: A-kinase anchor protein 17A (695 aa).

A PKA-RI and PKA-RII subunit binding domain region spans residues V83–V112. A Glycyl lysine isopeptide (Lys-Gly) (interchain with G-Cter in SUMO1); alternate cross-link involves residue K118. K118 participates in a covalent cross-link: Glycyl lysine isopeptide (Lys-Gly) (interchain with G-Cter in SUMO2); alternate. Residues D147–S256 form the RRM domain. A disordered region spans residues Q279–N337. Residues L425–D454 are PKA-RI-alpha subunit binding domain. Residues T482 to R695 form a disordered region. Phosphoserine is present on S537. A compositionally biased stretch (basic and acidic residues) spans V567–K585. 2 stretches are compositionally biased toward basic residues: residues R598 to A609 and R618 to A628. Positions Y629 to T644 are enriched in basic and acidic residues. S633 is subject to Phosphoserine. 2 stretches are compositionally biased toward basic residues: residues R645–E658 and S666–R695.

As to quaternary structure, monomer. Component of the spliceosome. Interacts with ZRANB2 and SFRS1/ASF through its Arg/Ser-rich domain. Interacts with RI and RII subunits of PKA. Widely expressed. Found in heart, brain, lung, liver, skeletal muscle, kidney and pancreas. Expressed in activated B-cells and placenta. Expressed in all cell lines tested including Jurkat-TAg, U-937 and HEK293 cells.

Its subcellular location is the nucleus speckle. Splice factor regulating alternative splice site selection for certain mRNA precursors. Mediates regulation of pre-mRNA splicing in a PKA-dependent manner. This chain is A-kinase anchor protein 17A (AKAP17A), found in Homo sapiens (Human).